We begin with the raw amino-acid sequence, 534 residues long: Chaperonin GroEL (534 aa).

Residues 29 to 32 (TAGP), 86 to 90 (DGTTT), Gly-413, and Asp-494 contribute to the ATP site.

This sequence belongs to the chaperonin (HSP60) family. As to quaternary structure, forms a cylinder of 14 subunits composed of two heptameric rings stacked back-to-back. Interacts with the co-chaperonin GroES.

The protein resides in the cytoplasm. It catalyses the reaction ATP + H2O + a folded polypeptide = ADP + phosphate + an unfolded polypeptide.. Together with its co-chaperonin GroES, plays an essential role in assisting protein folding. The GroEL-GroES system forms a nano-cage that allows encapsulation of the non-native substrate proteins and provides a physical environment optimized to promote and accelerate protein folding. This chain is Chaperonin GroEL, found in Mycoplasmoides gallisepticum (strain R(low / passage 15 / clone 2)) (Mycoplasma gallisepticum).